The primary structure comprises 349 residues: tRNA pseudouridine synthase D (349 aa).

Phe27 serves as a coordination point for substrate. Asp80 serves as the catalytic Nucleophile. Residue Asn129 coordinates substrate. Residues 155–303 (GVPNYFGAQR…VEAARRAMLL (149 aa)) enclose the TRUD domain. A substrate-binding site is contributed by Phe329.

It belongs to the pseudouridine synthase TruD family.

The enzyme catalyses uridine(13) in tRNA = pseudouridine(13) in tRNA. Its function is as follows. Responsible for synthesis of pseudouridine from uracil-13 in transfer RNAs. This is tRNA pseudouridine synthase D from Klebsiella pneumoniae (strain 342).